Consider the following 201-residue polypeptide: ATP-dependent Clp protease proteolytic subunit (201 aa).

Catalysis depends on Ser-98, which acts as the Nucleophile. Residue His-123 is part of the active site.

It belongs to the peptidase S14 family. As to quaternary structure, fourteen ClpP subunits assemble into 2 heptameric rings which stack back to back to give a disk-like structure with a central cavity, resembling the structure of eukaryotic proteasomes.

The protein localises to the cytoplasm. It catalyses the reaction Hydrolysis of proteins to small peptides in the presence of ATP and magnesium. alpha-casein is the usual test substrate. In the absence of ATP, only oligopeptides shorter than five residues are hydrolyzed (such as succinyl-Leu-Tyr-|-NHMec, and Leu-Tyr-Leu-|-Tyr-Trp, in which cleavage of the -Tyr-|-Leu- and -Tyr-|-Trp bonds also occurs).. Functionally, cleaves peptides in various proteins in a process that requires ATP hydrolysis. Has a chymotrypsin-like activity. Plays a major role in the degradation of misfolded proteins. The sequence is that of ATP-dependent Clp protease proteolytic subunit from Rickettsia akari (strain Hartford).